Reading from the N-terminus, the 611-residue chain is Mitochondrial import receptor subunit TOM70 (611 aa).

A2 carries the post-translational modification N-acetylalanine. Residues 2-41 lie on the Mitochondrial intermembrane side of the membrane; that stretch reads AASKPIEAAMAAAAAPGSGNGVGGGGGTAGPGSGAGTLPR. A helical transmembrane segment spans residues 42–62; sequence WHVALAIGAPLLLGAGAMYLW. Topologically, residues 63–611 are cytoplasmic; it reads SRRRRRREAG…KKYGLKPPTL (549 aa). The disordered stretch occupies residues 69–110; that stretch reads REAGGRGDASGLKRNSERKTPEGRASPALGSGHHDGSGDSLE. Position 74 is an omega-N-methylarginine (R74). Phosphoserine is present on residues S94, S99, S105, S108, and S113. TPR repeat units lie at residues 117-150 and 156-189; these read AQAAKNKGNKYFKAGKYEQAIQCYTEAISLCPTE and STFYQNRAAAFEQLQKWKEVAQDCTKAVELNPKY. The residue at position 188 (K188) is an N6-acetyllysine. A Glycyl lysine isopeptide (Lys-Gly) (interchain with G-Cter in SUMO2) cross-link involves residue K278. TPR repeat units lie at residues 297–330, 332–365, 370–403, 404–437, 445–478, 479–512, 514–547, and 548–581; these read ENSGYLKAKQYMEEENYDKIISECSKEIDAQGKY, AEALLLRATFYLLIGSANAAKPDLDKVISLKEAN, ANALIKRGTMCMQQQQPMLSTQDFNMAAEIDPMN, SDVYHHRGQLKILLDLVEEAVADFDACIRLRPKF, CFALYRQAYTANNSSQVQAAMKGFEEIIKKFPRC, AEGYALYAQALTDQQQFGKADEMYDKCIDLEPDN, TTYVHKGLLQLQWKQDLDKGLELISKAIEIDNKC, and DFAYETMGTIEVQRGNMEKAIDMFNKAINLAKSE.

It belongs to the Tom70 family. In terms of assembly, forms part of the preprotein translocase complex of the outer mitochondrial membrane (TOM complex) which consists of at least 7 different proteins (TOMM5, TOMM6, TOMM7, TOMM20, TOMM22, TOMM40 and TOMM70). Interacts with CAPN8. Interacts with TRADD, TRAF6 and STING. Interacts with MAVS. Interacts with HSPA8 and HSP90AA1; both interactions are required for preprotein mitochondrial import. The interaction with HSP90AA1 is direct and mediates the association of TOMM70 with IRF3 and TBK1. Upon mitochondrial depolarization, interacts with PINK1; the interaction is required for PINK1-TOM-TIM23 supercomplex formation which is critical for PINK1 stabilization at the outer mitochondrial membrane, kinase activation and downstream mitophagy. In terms of tissue distribution, expressed in the base region of the oxyntic and pyloric mucosae.

It is found in the mitochondrion outer membrane. Functionally, acts as a receptor of the preprotein translocase complex of the outer mitochondrial membrane (TOM complex). Recognizes and mediates the translocation of mitochondrial preproteins from the cytosol into the mitochondria in a chaperone dependent manner. Mediates TBK1 and IRF3 activation induced by MAVS in response to virus infection and promotes host antiviral responses during virus infection. This Mus musculus (Mouse) protein is Mitochondrial import receptor subunit TOM70.